A 208-amino-acid polypeptide reads, in one-letter code: Putative 3-methyladenine DNA glycosylase (208 aa).

It belongs to the DNA glycosylase MPG family.

The sequence is that of Putative 3-methyladenine DNA glycosylase from Nitrobacter winogradskyi (strain ATCC 25391 / DSM 10237 / CIP 104748 / NCIMB 11846 / Nb-255).